Here is a 258-residue protein sequence, read N- to C-terminus: Isoprenyl transferase 2 (258 aa).

D39 is a catalytic residue. Residue D39 coordinates Mg(2+). Substrate-binding positions include 40–43 (GNRR), W44, R52, H57, and 85–87 (SND). Catalysis depends on N88, which acts as the Proton acceptor. Residues R92, R207, and 213 to 215 (RLS) contribute to the substrate site. A Mg(2+)-binding site is contributed by E226.

Belongs to the UPP synthase family. In terms of assembly, homodimer. The cofactor is Mg(2+).

Its function is as follows. Catalyzes the condensation of isopentenyl diphosphate (IPP) with allylic pyrophosphates generating different type of terpenoids. In Tropheryma whipplei (strain Twist) (Whipple's bacillus), this protein is Isoprenyl transferase 2.